We begin with the raw amino-acid sequence, 127 residues long: Auxin-responsive protein SAUR76 (127 aa).

The interval 20-40 is disordered; the sequence is SFNTKPNQPPAQTNHSRSSAV.

Belongs to the ARG7 family. Expressed in cotyledons, hypocotyls and roots of young seedlings. Expressed in emerging lateral root, leaves, flowers, stamens and filaments.

It is found in the nucleus. The protein localises to the cytoplasm. It localises to the cell membrane. In terms of biological role, may be involved in the regulation of ethylene receptor signaling. Promotes cell expansion and plant growth. Involved in the regulation of cell elongation. The chain is Auxin-responsive protein SAUR76 from Arabidopsis thaliana (Mouse-ear cress).